The primary structure comprises 337 residues: Phenylalanine--tRNA ligase alpha subunit (337 aa).

E258 serves as a coordination point for Mg(2+).

The protein belongs to the class-II aminoacyl-tRNA synthetase family. Phe-tRNA synthetase alpha subunit type 1 subfamily. As to quaternary structure, tetramer of two alpha and two beta subunits. The cofactor is Mg(2+).

The protein localises to the cytoplasm. The catalysed reaction is tRNA(Phe) + L-phenylalanine + ATP = L-phenylalanyl-tRNA(Phe) + AMP + diphosphate + H(+). The chain is Phenylalanine--tRNA ligase alpha subunit from Burkholderia mallei (strain ATCC 23344).